Reading from the N-terminus, the 157-residue chain is Cyclic pyranopterin monophosphate synthase (157 aa).

Substrate contacts are provided by residues 74–76 (MCH) and 112–113 (ME). Aspartate 127 is an active-site residue.

Belongs to the MoaC family. Homohexamer; trimer of dimers.

The enzyme catalyses (8S)-3',8-cyclo-7,8-dihydroguanosine 5'-triphosphate = cyclic pyranopterin phosphate + diphosphate. Its pathway is cofactor biosynthesis; molybdopterin biosynthesis. Its function is as follows. Catalyzes the conversion of (8S)-3',8-cyclo-7,8-dihydroguanosine 5'-triphosphate to cyclic pyranopterin monophosphate (cPMP). This is Cyclic pyranopterin monophosphate synthase from Campylobacter jejuni subsp. jejuni serotype O:6 (strain 81116 / NCTC 11828).